The sequence spans 563 residues: Chaperonin GroEL 1 (563 aa).

Residues 29-32 (TIGP), 86-90 (DGTTT), G413, and D492 contribute to the ATP site. Positions 520–541 (DKPEPPSAPGAEGGDPMGGMGG) are disordered. Residues 530–541 (AEGGDPMGGMGG) show a composition bias toward gly residues.

It belongs to the chaperonin (HSP60) family. As to quaternary structure, forms a cylinder of 14 subunits composed of two heptameric rings stacked back-to-back. Interacts with the co-chaperonin GroES.

Its subcellular location is the cytoplasm. It carries out the reaction ATP + H2O + a folded polypeptide = ADP + phosphate + an unfolded polypeptide.. Functionally, together with its co-chaperonin GroES, plays an essential role in assisting protein folding. The GroEL-GroES system forms a nano-cage that allows encapsulation of the non-native substrate proteins and provides a physical environment optimized to promote and accelerate protein folding. The sequence is that of Chaperonin GroEL 1 from Prochlorococcus marinus (strain NATL1A).